A 212-amino-acid polypeptide reads, in one-letter code: MGDWGRADYLSRHGIKDARVLEAIARLNRADFVPEDLREEASADSPLPIGHGQTISQPYVVALMTEALQLQGDERVLEIGTGSGYQTALLSLLCREVYSVEIVPELAQSAREVLGRQGFENVSFREGDGSLGWPDQAPFDAILAAAAPPDVPLQLLSQLKPGGRMIIPVGPRGGTQQLLRIQRALRPGEVPQVESLLSVRFVPMTGQPLSQG.

Residue Ser56 is part of the active site.

The protein belongs to the methyltransferase superfamily. L-isoaspartyl/D-aspartyl protein methyltransferase family.

It is found in the cytoplasm. It catalyses the reaction [protein]-L-isoaspartate + S-adenosyl-L-methionine = [protein]-L-isoaspartate alpha-methyl ester + S-adenosyl-L-homocysteine. In terms of biological role, catalyzes the methyl esterification of L-isoaspartyl residues in peptides and proteins that result from spontaneous decomposition of normal L-aspartyl and L-asparaginyl residues. It plays a role in the repair and/or degradation of damaged proteins. This Myxococcus xanthus (strain DK1622) protein is Protein-L-isoaspartate O-methyltransferase.